Here is a 354-residue protein sequence, read N- to C-terminus: Uroporphyrinogen decarboxylase (354 aa).

Substrate is bound by residues 27-31 (RQAGR), aspartate 77, tyrosine 154, threonine 209, and histidine 327.

It belongs to the uroporphyrinogen decarboxylase family. Homodimer.

The protein localises to the cytoplasm. It carries out the reaction uroporphyrinogen III + 4 H(+) = coproporphyrinogen III + 4 CO2. Its pathway is porphyrin-containing compound metabolism; protoporphyrin-IX biosynthesis; coproporphyrinogen-III from 5-aminolevulinate: step 4/4. Functionally, catalyzes the decarboxylation of four acetate groups of uroporphyrinogen-III to yield coproporphyrinogen-III. This chain is Uroporphyrinogen decarboxylase, found in Actinobacillus succinogenes (strain ATCC 55618 / DSM 22257 / CCUG 43843 / 130Z).